Consider the following 396-residue polypeptide: Tryptophan synthase beta chain (396 aa).

Lys-86 is modified (N6-(pyridoxal phosphate)lysine).

This sequence belongs to the TrpB family. Tetramer of two alpha and two beta chains. The cofactor is pyridoxal 5'-phosphate.

It catalyses the reaction (1S,2R)-1-C-(indol-3-yl)glycerol 3-phosphate + L-serine = D-glyceraldehyde 3-phosphate + L-tryptophan + H2O. It functions in the pathway amino-acid biosynthesis; L-tryptophan biosynthesis; L-tryptophan from chorismate: step 5/5. The beta subunit is responsible for the synthesis of L-tryptophan from indole and L-serine. The polypeptide is Tryptophan synthase beta chain (Aliivibrio fischeri (strain ATCC 700601 / ES114) (Vibrio fischeri)).